The following is a 130-amino-acid chain: Flagellar assembly factor FliW (130 aa).

This sequence belongs to the FliW family. Interacts with translational regulator CsrA and flagellin(s).

Its subcellular location is the cytoplasm. Acts as an anti-CsrA protein, binds CsrA and prevents it from repressing translation of its target genes, one of which is flagellin. Binds to flagellin and participates in the assembly of the flagellum. The polypeptide is Flagellar assembly factor FliW (Clostridioides difficile (strain 630) (Peptoclostridium difficile)).